A 422-amino-acid polypeptide reads, in one-letter code: 26S proteasome non-ATPase regulatory subunit 11 (422 aa).

Ala2 bears the N-acetylalanine mark. 2 positions are modified to phosphoserine: Ser14 and Ser23. A PCI domain is found at 224 to 392; it reads DWKTAYSYFY…GVLIIFDEPP (169 aa). Residue Lys274 forms a Glycyl lysine isopeptide (Lys-Gly) (interchain with G-Cter in SUMO2) linkage.

This sequence belongs to the proteasome subunit S9 family. Component of the 19S proteasome regulatory particle complex. The 26S proteasome consists of a 20S core particle (CP) and two 19S regulatory subunits (RP). The regulatory particle is made of a lid composed of 9 subunits including PSMD11, a base containing 6 ATPases and few additional components.

Its function is as follows. Component of the 26S proteasome, a multiprotein complex involved in the ATP-dependent degradation of ubiquitinated proteins. This complex plays a key role in the maintenance of protein homeostasis by removing misfolded or damaged proteins, which could impair cellular functions, and by removing proteins whose functions are no longer required. Therefore, the proteasome participates in numerous cellular processes, including cell cycle progression, apoptosis, or DNA damage repair. In the complex, PSMD11 is required for proteasome assembly. Plays a key role in increased proteasome activity in embryonic stem cells (ESCs): its high expression in ESCs promotes enhanced assembly of the 26S proteasome, followed by higher proteasome activity. The sequence is that of 26S proteasome non-ATPase regulatory subunit 11 (Psmd11) from Mus musculus (Mouse).